Reading from the N-terminus, the 226-residue chain is Lysoplasmalogenase TMEM86B (226 aa).

The Cytoplasmic segment spans residues 1–23; sequence MDARKEGLPLETLFSDQYPQVRR. A helical membrane pass occupies residues 24–40; that stretch reads WLAPFILACSLYFLLWI. Residues 41–46 lie on the Extracellular side of the membrane; sequence PVDQPS. A helical transmembrane segment spans residues 47–68; it reads WVSALIKCQPILCLVVFLWAVA. Over 69-74 the chain is Cytoplasmic; it reads PGGSST. A helical transmembrane segment spans residues 75-93; sequence WLLQGALVCSAVGDACLIW. The Extracellular segment spans residues 94-99; the sequence is PEAFFY. A helical membrane pass occupies residues 100 to 117; that stretch reads GTAAFSVAHLFYLGAFGL. Residues 118–123 lie on the Cytoplasmic side of the membrane; the sequence is TPLQPG. The helical transmembrane segment at 124-140 threads the bilayer; sequence LLLCTTLASLTYYSFLL. Over 141–146 the chain is Extracellular; the sequence is LHLEQG. Residues 147-163 traverse the membrane as a helical segment; the sequence is MVLPVMAYGLILNSMLW. Residues 164-171 are Cytoplasmic-facing; the sequence is RSLVWGGS. The helical transmembrane segment at 172 to 188 threads the bilayer; sequence ASWGAVLFTFSDGVLAW. Residues 189 to 199 lie on the Extracellular side of the membrane; it reads DTFVYSLPFAR. The chain crosses the membrane as a helical span at residues 200–218; it reads LVTMSTYYAAQLLLILSAL. At 219 to 226 the chain is on the cytoplasmic side; sequence RNPGLKTH.

It belongs to the TMEM86 family. As to quaternary structure, homodimer. In terms of tissue distribution, enriched in liver. Also detected in brain and testis.

The protein localises to the endoplasmic reticulum membrane. Its subcellular location is the cytoplasm. The catalysed reaction is a 1-O-(1Z-alkenyl)-sn-glycero-3-phosphocholine + H2O = a 2,3-saturated aldehyde + sn-glycerol 3-phosphocholine. The enzyme catalyses a 1-O-(1Z-alkenyl)-sn-glycero-3-phosphoethanolamine + H2O = a 2,3-saturated aldehyde + sn-glycero-3-phosphoethanolamine. Competitively inhibited by lysophosphatidic acid. In terms of biological role, catalyzes the hydrolysis of the vinyl ether bond of choline or ethanolamine lysoplasmalogens, forming fatty aldehyde and glycerophosphocholine or glycerophosphoethanolamine, respectively and is specific for the sn-2-deacylated (lyso) form of plasmalogen. In Mus musculus (Mouse), this protein is Lysoplasmalogenase TMEM86B (Tmem86b).